The primary structure comprises 381 residues: 1-deoxy-D-xylulose 5-phosphate reductoisomerase (381 aa).

NADPH-binding residues include Thr-10, Gly-11, Ser-12, Ile-13, Asn-38, and Asn-121. Lys-122 contributes to the 1-deoxy-D-xylulose 5-phosphate binding site. Glu-123 is an NADPH binding site. Asp-147 serves as a coordination point for Mn(2+). Residues Ser-148, Glu-149, Ser-173, and His-196 each coordinate 1-deoxy-D-xylulose 5-phosphate. Glu-149 serves as a coordination point for Mn(2+). Residue Gly-202 coordinates NADPH. 1-deoxy-D-xylulose 5-phosphate contacts are provided by Ser-209, Asn-214, Lys-215, and Glu-218. Glu-218 provides a ligand contact to Mn(2+).

This sequence belongs to the DXR family. The cofactor is Mg(2+). Requires Mn(2+) as cofactor.

It carries out the reaction 2-C-methyl-D-erythritol 4-phosphate + NADP(+) = 1-deoxy-D-xylulose 5-phosphate + NADPH + H(+). It functions in the pathway isoprenoid biosynthesis; isopentenyl diphosphate biosynthesis via DXP pathway; isopentenyl diphosphate from 1-deoxy-D-xylulose 5-phosphate: step 1/6. Catalyzes the NADPH-dependent rearrangement and reduction of 1-deoxy-D-xylulose-5-phosphate (DXP) to 2-C-methyl-D-erythritol 4-phosphate (MEP). The polypeptide is 1-deoxy-D-xylulose 5-phosphate reductoisomerase (Alkaliphilus oremlandii (strain OhILAs) (Clostridium oremlandii (strain OhILAs))).